The following is a 404-amino-acid chain: NADH-quinone oxidoreductase subunit D 2 (404 aa).

The protein belongs to the complex I 49 kDa subunit family. As to quaternary structure, NDH-1 is composed of 14 different subunits. Subunits NuoB, C, D, E, F, and G constitute the peripheral sector of the complex.

It localises to the cell inner membrane. It catalyses the reaction a quinone + NADH + 5 H(+)(in) = a quinol + NAD(+) + 4 H(+)(out). Functionally, NDH-1 shuttles electrons from NADH, via FMN and iron-sulfur (Fe-S) centers, to quinones in the respiratory chain. The immediate electron acceptor for the enzyme in this species is believed to be ubiquinone. Couples the redox reaction to proton translocation (for every two electrons transferred, four hydrogen ions are translocated across the cytoplasmic membrane), and thus conserves the redox energy in a proton gradient. This chain is NADH-quinone oxidoreductase subunit D 2, found in Rhizobium meliloti (strain 1021) (Ensifer meliloti).